We begin with the raw amino-acid sequence, 970 residues long: Unconventional myosin-XIX (970 aa).

Residues 35-758 (YKLDDLTRVN…MLELLECGRA (724 aa)) enclose the Myosin motor domain. Position 132-139 (132-139 (GESGAGKT)) interacts with ATP. Positions 602–624 (LEQLLQVLHSTTPHYIRCIKPNS) are actin-binding. Ser-685 is modified (phosphoserine). IQ domains are found at residues 759 to 779 (RVLE…RHRE) and 783 to 812 (QWRA…AATV). The segment at 824 to 970 (MACLAAKELD…VTSSAFTGLG (147 aa)) is myMOMA region.

It belongs to the TRAFAC class myosin-kinesin ATPase superfamily. Myosin family. As to quaternary structure, myosin is a hexamer of 2 heavy chains and 4 light chains: interacts with myosin light chains MYL9 and MYL12B. As to expression, widely expressed in multiple tissues and cell lines.

It is found in the mitochondrion outer membrane. It localises to the cytoplasm. The protein resides in the cytoskeleton. Actin-based motor molecule with ATPase activity that localizes to the mitochondrion outer membrane. Motor protein that moves towards the plus-end of actin filaments. Required for mitochondrial inheritance during mitosis. May be involved in mitochondrial transport or positioning. The chain is Unconventional myosin-XIX from Homo sapiens (Human).